The chain runs to 204 residues: Dof zinc finger protein DOF3.1 (204 aa).

The interval 1 to 25 (MQDPAAYYQTMMAKQQQQQQPQFAE) is disordered. A Dof-type zinc finger spans residues 29–83 (LKCPRCDSPNTKFCYYNNYNLSQPRHFCKSCRRYWTKGGALRNVPVGGGSRKNAT). The Zn(2+) site is built by C31, C34, C56, and C59. Disordered regions lie at residues 70 to 128 (RNVP…TRML) and 182 to 204 (RTEP…AEKN). Residues 84-102 (KRSTSSSSSASSPSNSSQN) show a composition bias toward low complexity. Basic and acidic residues predominate over residues 106–124 (KNPDPDPDPRNSQKPDLDP).

Its subcellular location is the nucleus. In terms of biological role, transcription factor that binds specifically to a 5'-AA[AG]G-3' consensus core sequence. This chain is Dof zinc finger protein DOF3.1 (DOF3.1), found in Arabidopsis thaliana (Mouse-ear cress).